The primary structure comprises 288 residues: Bifunctional protein FolD (288 aa).

NADP(+) is bound by residues 164-166 (GRS) and V230.

Belongs to the tetrahydrofolate dehydrogenase/cyclohydrolase family. Homodimer.

It carries out the reaction (6R)-5,10-methylene-5,6,7,8-tetrahydrofolate + NADP(+) = (6R)-5,10-methenyltetrahydrofolate + NADPH. It catalyses the reaction (6R)-5,10-methenyltetrahydrofolate + H2O = (6R)-10-formyltetrahydrofolate + H(+). The protein operates within one-carbon metabolism; tetrahydrofolate interconversion. Catalyzes the oxidation of 5,10-methylenetetrahydrofolate to 5,10-methenyltetrahydrofolate and then the hydrolysis of 5,10-methenyltetrahydrofolate to 10-formyltetrahydrofolate. The sequence is that of Bifunctional protein FolD from Thermomicrobium roseum (strain ATCC 27502 / DSM 5159 / P-2).